Here is an 804-residue protein sequence, read N- to C-terminus: Leucine--tRNA ligase (804 aa).

A 'HIGH' region motif is present at residues 40–51 (PYPSGAGLHVGH). The 'KMSKS' region signature appears at 576 to 580 (KMSKS). Lys-579 contributes to the ATP binding site.

This sequence belongs to the class-I aminoacyl-tRNA synthetase family.

The protein localises to the cytoplasm. The catalysed reaction is tRNA(Leu) + L-leucine + ATP = L-leucyl-tRNA(Leu) + AMP + diphosphate. In Staphylococcus aureus (strain Mu3 / ATCC 700698), this protein is Leucine--tRNA ligase.